The chain runs to 132 residues: U11/U12 small nuclear ribonucleoprotein 25 kDa protein (132 aa).

A Ubiquitin-like domain is found at 41–132 (MTVRVCKMDG…VSFIKKLRQK (92 aa)).

In terms of assembly, component of the U11/U12 snRNPs that are part of the U12-type spliceosome.

Its subcellular location is the nucleus. This is U11/U12 small nuclear ribonucleoprotein 25 kDa protein (SNRNP25) from Homo sapiens (Human).